Here is a 423-residue protein sequence, read N- to C-terminus: Levansucrase (423 aa).

Sucrose-binding residues include W47, D48, S119, R193, and D194. D48 (nucleophile) is an active-site residue. The Proton donor/acceptor role is filled by E278.

It belongs to the glycosyl hydrolase 68 family.

It is found in the secreted. The enzyme catalyses [6)-beta-D-fructofuranosyl-(2-&gt;](n) alpha-D-glucopyranoside + sucrose = [6)-beta-D-fructofuranosyl-(2-&gt;](n+1) alpha-D-glucopyranoside + D-glucose. Functionally, catalyzes the synthesis of levan, a fructose polymer, by transferring the fructosyl moiety from sucrose to a growing acceptor molecule. The sequence is that of Levansucrase from Zymomonas mobilis subsp. mobilis (strain ATCC 10988 / DSM 424 / LMG 404 / NCIMB 8938 / NRRL B-806 / ZM1).